Consider the following 752-residue polypeptide: Complement C2 (752 aa).

Positions 1-20 are cleaved as a signal peptide; that stretch reads MGPLMVLFCLLFLYPGLADS. Sushi domains follow at residues 22–86, 87–146, and 149–206; these read PSCP…VCKP, VRCP…VCDN, and GHCP…ICRQ. 6 cysteine pairs are disulfide-bonded: C24-C64, C51-C84, C89-C131, C117-C144, C151-C191, and C177-C204. N29 carries an N-linked (GlcNAc...) asparagine glycan. N112 carries an N-linked (GlcNAc...) asparagine glycan. Residues 254-452 form the VWFA domain; it reads NLYLLLDCSQ…KALHQVFEHM (199 aa). Positions 260–264 match the MIDAS-like motif motif; that stretch reads DCSQS. Residues S262 and S264 each contribute to the Mg(2+) site. Residues N290 and N333 are each glycosylated (N-linked (GlcNAc...) asparagine). T337 provides a ligand contact to Mg(2+). 3 disulfides stabilise this stretch: C463/C581, C492/C508, and C584/C600. The Peptidase S1 domain maps to 464–744; it reads GVGNMSANAS…MQPWLRQHLG (281 aa). N-linked (GlcNAc...) asparagine glycans are attached at residues N467 and N471. Active-site charge relay system residues include H507 and D561. 2 N-linked (GlcNAc...) asparagine glycosylation sites follow: N621 and N651. Disulfide bonds link C638–C665 and C675–C705. Residue S679 is the Charge relay system of the active site.

This sequence belongs to the peptidase S1 family. Serine protease component of the C3 convertase, also named C4bC2b, composed of the serine protease complement C2b and complement C4b. Serine protease component of the C5 convertase, also named C4bC2bC3b, composed of the serine protease complement C2b, complement C3b, as well as complement C4b. Mg(2+) serves as cofactor. It depends on Mn(2+) as a cofactor. Post-translationally, cleaved and activated by different proteases depending on the complement pathway to generate complement C2a and serine protease complement C2b chains. Cleaved and activated by C1S following activation by the classical complement system. Cleaved and activated by MASP2 following activation by the lectin complement system. Cleaved and activated by GZMK following activation by the GZMK complement system.

The protein localises to the secreted. It is found in the cell surface. It carries out the reaction Selective cleavage of Arg-|-Ser bond in complement component C3 alpha-chain to form C3a and C3b, and Arg-|-Xaa bond in complement component C5 alpha-chain to form C5a and C5b.. In terms of biological role, precursor of the catalytic component of the C3 and C5 convertase complexes, which are part of the complement pathway, a cascade of proteins that leads to phagocytosis and breakdown of pathogens and signaling that strengthens the adaptive immune system. Component C2 is part of the classical, lectin and GZMK complement systems. Its function is as follows. Catalytic component of the complement C3 and C5 convertase complexes. Following complement activation, recruited to the surface of pathogens by complement C4b opsonin to form the C3 convertase, or C3b and C4b opsonins to form the C5 convertase. As part of the C3 convertase, cleaves and activate C3 into C3a anaphylatoxin and C3b opsonin, the next components of the complement pathways. As part of the C5 convertase, cleaves and activate C5 into C5a anaphylatoxin and C5b component of the membrane attack complex. The protein is Complement C2 of Pan troglodytes (Chimpanzee).